Reading from the N-terminus, the 486-residue chain is Elastin-binding protein EbpS (486 aa).

A compositionally biased stretch (basic and acidic residues) spans 1-40; the sequence is MSNNFKDDFEKNRQSIDTNSHQDHTEDVEKDQSELEHQDT. Residues 1 to 314 form a disordered region; the sequence is MSNNFKDDFE…NHDRDKERKK (314 aa). Topologically, residues 2–204 are extracellular; it reads SNNFKDDFEK…EPKEHHNGKK (203 aa). The interval 14-34 is elastin-binding; that stretch reads QSIDTNSHQDHTEDVEKDQSE. Residues 64–85 show a composition bias toward polar residues; the sequence is TNHNKQVHNESQTSEDNVQNEA. 2 stretches are compositionally biased toward basic and acidic residues: residues 103 to 118 and 126 to 143; these read EPSHQDSTPQHEEEYY and DKSHPEPIEDNDKHDTIK. Residues 161–179 are compositionally biased toward polar residues; that stretch reads EQSQQPKPYFTTGANQSET. A compositionally biased stretch (basic and acidic residues) spans 180–199; it reads SKNEHDNDSVKQDQDEPKEH. The segment covering 204–225 has biased composition (low complexity); it reads KAAAIGAGTAGVAGAAGAMAAS. A helical membrane pass occupies residues 205-225; sequence AAAIGAGTAGVAGAAGAMAAS. Residues 226-319 are Cytoplasmic-facing; it reads KAKKHSNDAQ…KERKKGGMAK (94 aa). Over residues 233-246 the composition is skewed to polar residues; the sequence is DAQNKSNSGKANNS. Over residues 247-259 the composition is skewed to basic and acidic residues; the sequence is TEDKASQDKSKDH. Low complexity predominate over residues 278–297; that stretch reads GAASKSASAASKPHASNNAS. Residues 299-314 show a composition bias toward basic and acidic residues; that stretch reads NHDEHDNHDRDKERKK. Residues 320–340 form a helical membrane-spanning segment; sequence VLLPLIAAVLIIGALAIFGGM. Over 341 to 486 the chain is Extracellular; sequence ALNNHNNGTK…IRNGQQIVIP (146 aa). The segment at 351–440 is disordered; sequence ENKIANTNKN…QRQGGGQRHT (90 aa). Basic and acidic residues predominate over residues 361 to 398; the sequence is NADESKDKDTSKDASKDKSKSTDSDKSKEDQDKATKDE. Low complexity predominate over residues 403 to 431; sequence QNNANQANNQAQNNQNQQQANQNQQQQQQ. Positions 437–485 constitute a LysM domain; sequence QRHTVNGQENLYRIAIQYYGSGSPENVEKIRRANGLSGNNIRNGQQIVI.

The protein localises to the cell membrane. Promotes binding of soluble elastin peptides and tropoelastin to S.aureus cells although it is not able to promote bacterial adherence to immobilized elastin and, therefore, is not a microbial surface component recognizing adhesive matrix molecule (MSCRAMM). The sequence is that of Elastin-binding protein EbpS (ebpS) from Staphylococcus aureus (strain USA300).